A 302-amino-acid chain; its full sequence is HTH-type transcriptional regulator AlsR (302 aa).

Positions 1–58 (MELRHLQYFIAVAEELHFGKAARRLNMTQPPLSQQIKQLEEEVGVTLLKRTKRFVELT) constitute an HTH lysR-type domain. A DNA-binding region (H-T-H motif) is located at residues 18–37 (FGKAARRLNMTQPPLSQQIK).

The protein belongs to the LysR transcriptional regulatory family.

Its function is as follows. Regulates the expression of the alsSD operon for acetoin biosynthesis. The protein is HTH-type transcriptional regulator AlsR (alsR) of Bacillus subtilis (strain 168).